A 796-amino-acid polypeptide reads, in one-letter code: RNA cytosine-C(5)-methyltransferase NSUN2 (796 aa).

A compositionally biased stretch (basic residues) spans 1 to 11; it reads MGRRARDRRRQ. Residues 1-36 form a disordered region; sequence MGRRARDRRRQLQPQQRRERSGGGGGGGDDQAGWAG. Positions 22–36 are enriched in gly residues; the sequence is GGGGGGGDDQAGWAG. Residues 184–190, Asp215, Asp242, and Asp268 contribute to the S-adenosyl-L-methionine site; that span reads CAAPGSK. Cys321 (nucleophile) is an active-site residue. Disordered stretches follow at residues 435-501 and 707-796; these read WNKR…CGPP and RKEG…NVKD. Basic and acidic residues-rich tracts occupy residues 467–483, 708–721, and 733–746; these read ATEKPTLAEDEEPKKVQ, KEGESEGKTEEEVQ, and VEDKERDAVTKMEA. The segment covering 774 to 783 has biased composition (polar residues); sequence CSKNTNSHIN. Residues 784-796 are compositionally biased toward basic and acidic residues; the sequence is QESKDMNTNNVKD.

The protein belongs to the class I-like SAM-binding methyltransferase superfamily. RsmB/NOP family. TRM4 subfamily.

It is found in the nucleus. It localises to the nucleolus. The protein localises to the cytoplasm. Its subcellular location is the mitochondrion. The protein resides in the cytoskeleton. It is found in the spindle. It localises to the secreted. The protein localises to the extracellular exosome. It catalyses the reaction cytidine(48) in tRNA + S-adenosyl-L-methionine = 5-methylcytidine(48) in tRNA + S-adenosyl-L-homocysteine + H(+). The enzyme catalyses cytidine(49) in tRNA + S-adenosyl-L-methionine = 5-methylcytidine(49) in tRNA + S-adenosyl-L-homocysteine + H(+). It carries out the reaction cytidine(50) in tRNA + S-adenosyl-L-methionine = 5-methylcytidine(50) in tRNA + S-adenosyl-L-homocysteine + H(+). The catalysed reaction is cytidine(34) in tRNA precursor + S-adenosyl-L-methionine = 5-methylcytidine(34) in tRNA precursor + S-adenosyl-L-homocysteine + H(+). It catalyses the reaction a cytidine in mRNA + S-adenosyl-L-methionine = a 5-methylcytidine in mRNA + S-adenosyl-L-homocysteine + H(+). RNA cytosine C(5)-methyltransferase that methylates cytosine to 5-methylcytosine (m5C) in various RNAs, such as tRNAs, mRNAs and some long non-coding RNAs (lncRNAs). Involved in various processes, such as epidermal stem cell differentiation, testis differentiation and maternal to zygotic transition during early development: acts by increasing protein synthesis; cytosine C(5)-methylation promoting tRNA stability and preventing mRNA decay. Methylates cytosine to 5-methylcytosine (m5C) at positions 34 and 48 of intron-containing tRNA(Leu)(CAA) precursors, and at positions 48, 49 and 50 of tRNA(Gly)(GCC) precursors. tRNA methylation is required generation of RNA fragments derived from tRNAs (tRFs). Also mediates C(5)-methylation of mitochondrial tRNAs. Catalyzes cytosine C(5)-methylation of mRNAs, leading to stabilize them and prevent mRNA decay. Cytosine C(5)-methylation of mRNAs also regulates mRNA export. Also mediates cytosine C(5)-methylation of non-coding RNAs, such as vault RNAs (vtRNAs), promoting their processing into regulatory small RNAs. Required for proper spindle assembly and chromosome segregation, independently of its methyltransferase activity. The sequence is that of RNA cytosine-C(5)-methyltransferase NSUN2 from Gallus gallus (Chicken).